The chain runs to 435 residues: Casein kinase I homolog 2 (435 aa).

The Protein kinase domain occupies 12 to 282 (YRVGRKIGEG…FLQELFDDVL (271 aa)). ATP-binding positions include 18 to 26 (IGEGSFGVI) and Lys-41. Asp-131 (proton acceptor) is an active-site residue. The residue at position 361 (Ser-361) is a Phosphoserine.

It belongs to the protein kinase superfamily. CK1 Ser/Thr protein kinase family. Casein kinase I subfamily.

The protein resides in the cytoplasm. It carries out the reaction L-seryl-[protein] + ATP = O-phospho-L-seryl-[protein] + ADP + H(+). The catalysed reaction is L-threonyl-[protein] + ATP = O-phospho-L-threonyl-[protein] + ADP + H(+). Its function is as follows. Casein kinases are operationally defined by their preferential utilization of acidic proteins such as caseins as substrates. May contribute to the regulation of morphology. The sequence is that of Casein kinase I homolog 2 (cki2) from Schizosaccharomyces pombe (strain 972 / ATCC 24843) (Fission yeast).